Here is a 159-residue protein sequence, read N- to C-terminus: U1 small nuclear ribonucleoprotein C (159 aa).

The Matrin-type zinc-finger motif lies at 4 to 36; it reads FYCDYCDTYLTHDSPSVRKTHCSGRKHKENVKD. A disordered region spans residues 61–99; that stretch reads KIPPTPFPGAPPPGGSLLPHPSIGGPPRPGMLPAPPMGG. Composition is skewed to pro residues over residues 63 to 74 and 84 to 99; these read PPTPFPGAPPPG and GGPP…PMGG.

The protein belongs to the U1 small nuclear ribonucleoprotein C family. Component of the U1 snRNP. The U1 snRNP is composed of the U1 snRNA and the 7 core Sm proteins snrpb, snrpd1, snrpd2, snrpd3, snrpe, snrpf and snrpg that assemble in a heptameric protein ring on the Sm site of the small nuclear RNA to form the core snRNP, and at least 3 U1 snRNP-specific proteins snrnp70/U1-70K, snrpa/U1-A and snrpc/U1-C. snrpc/U1-C interacts with U1 snRNA and the 5' splice-site region of the pre-mRNA.

The protein resides in the nucleus. Functionally, component of the spliceosomal U1 snRNP, which is essential for recognition of the pre-mRNA 5' splice-site and the subsequent assembly of the spliceosome. snrpc/U1-C is directly involved in initial 5' splice-site recognition for both constitutive and regulated alternative splicing. The interaction with the 5' splice-site seems to precede base-pairing between the pre-mRNA and the U1 snRNA. Stimulates commitment or early (E) complex formation by stabilizing the base pairing of the 5' end of the U1 snRNA and the 5' splice-site region. In Danio rerio (Zebrafish), this protein is U1 small nuclear ribonucleoprotein C.